A 193-amino-acid chain; its full sequence is Dense granule protein 2 (193 aa).

N4 is a glycosylation site (N-linked (GlcNAc...) asparagine). A helical transmembrane segment spans residues F14 to L34. Residue N74 is glycosylated (N-linked (GlcNAc...) asparagine). Residues S75–A140 are disordered. The span at E88 to T98 shows a compositional bias: acidic residues. A helical membrane pass occupies residues H153–S173. The segment at R174–K193 is disordered.

It belongs to the Gra6 family.

It is found in the membrane. The polypeptide is Dense granule protein 2 (DG2) (Neospora caninum (Coccidian parasite)).